The sequence spans 153 residues: 6,7-dimethyl-8-ribityllumazine synthase (153 aa).

Residues Phe-22, 56 to 58 (AFE), and 80 to 82 (TVI) contribute to the 5-amino-6-(D-ribitylamino)uracil site. 85–86 (ST) serves as a coordination point for (2S)-2-hydroxy-3-oxobutyl phosphate. The active-site Proton donor is the His-88. Position 113 (Phe-113) interacts with 5-amino-6-(D-ribitylamino)uracil. Arg-127 contacts (2S)-2-hydroxy-3-oxobutyl phosphate.

Belongs to the DMRL synthase family. In terms of assembly, forms an icosahedral capsid composed of 60 subunits, arranged as a dodecamer of pentamers.

The catalysed reaction is (2S)-2-hydroxy-3-oxobutyl phosphate + 5-amino-6-(D-ribitylamino)uracil = 6,7-dimethyl-8-(1-D-ribityl)lumazine + phosphate + 2 H2O + H(+). Its pathway is cofactor biosynthesis; riboflavin biosynthesis; riboflavin from 2-hydroxy-3-oxobutyl phosphate and 5-amino-6-(D-ribitylamino)uracil: step 1/2. Catalyzes the formation of 6,7-dimethyl-8-ribityllumazine by condensation of 5-amino-6-(D-ribitylamino)uracil with 3,4-dihydroxy-2-butanone 4-phosphate. This is the penultimate step in the biosynthesis of riboflavin. This is 6,7-dimethyl-8-ribityllumazine synthase from Actinobacillus pleuropneumoniae serotype 7 (strain AP76).